The sequence spans 642 residues: 1-deoxy-D-xylulose-5-phosphate synthase (642 aa).

Residues H73 and 114-116 (SHA) each bind thiamine diphosphate. D145 lines the Mg(2+) pocket. Residues 146–147 (GA), N175, F286, and E367 contribute to the thiamine diphosphate site. N175 is a binding site for Mg(2+).

The protein belongs to the transketolase family. DXPS subfamily. Homodimer. Mg(2+) is required as a cofactor. Requires thiamine diphosphate as cofactor.

The enzyme catalyses D-glyceraldehyde 3-phosphate + pyruvate + H(+) = 1-deoxy-D-xylulose 5-phosphate + CO2. Its pathway is metabolic intermediate biosynthesis; 1-deoxy-D-xylulose 5-phosphate biosynthesis; 1-deoxy-D-xylulose 5-phosphate from D-glyceraldehyde 3-phosphate and pyruvate: step 1/1. In terms of biological role, catalyzes the acyloin condensation reaction between C atoms 2 and 3 of pyruvate and glyceraldehyde 3-phosphate to yield 1-deoxy-D-xylulose-5-phosphate (DXP). The chain is 1-deoxy-D-xylulose-5-phosphate synthase from Saccharopolyspora erythraea (strain ATCC 11635 / DSM 40517 / JCM 4748 / NBRC 13426 / NCIMB 8594 / NRRL 2338).